The primary structure comprises 332 residues: 30 kDa heat shock protein (332 aa).

The Extracellular portion of the chain corresponds to 1–34; it reads MNDTLSSFLNRNEALGLNPPHGLDMHITKRGSDW. Residues 35-55 form a helical membrane-spanning segment; sequence LWAVFAVFGFILLCYVVMFFI. Topologically, residues 56-65 are cytoplasmic; the sequence is AENKGSRLTR. Residues 66–86 form a helical membrane-spanning segment; the sequence is YALAPAFLITFFEFFAFFTYA. Topologically, residues 87–121 are extracellular; it reads SDLGWTGVQAEFNHVKVSKSITGEVPGIRQIFYSK. The chain crosses the membrane as a helical span at residues 122–142; the sequence is YIAWFLSWPCLLFLIELAAST. Topologically, residues 143–157 are cytoplasmic; the sequence is TGENDDISALDMVHS. The helical transmembrane segment at 158-178 threads the bilayer; that stretch reads LLIQIVGTLFWVVSLLVGSLI. Over 179–181 the chain is Extracellular; the sequence is KST. A helical transmembrane segment spans residues 182 to 202; that stretch reads YKWGYYTIGAVAMLVTQGVIC. Residues 203–215 are Cytoplasmic-facing; that stretch reads QRQFFNLKTRGFN. A helical membrane pass occupies residues 216–236; that stretch reads ALMLCTCMVIVWLYFICWGLS. At 237–248 the chain is on the extracellular side; it reads DGGNRIQPDGEA. The chain crosses the membrane as a helical span at residues 249–269; that stretch reads IFYGVLDLCVFAIYPCYLLIA. The Cytoplasmic portion of the chain corresponds to 270–332; that stretch reads VSRDGKLPRL…EAEQAVEDTA (63 aa). Positions 290–332 are disordered; sequence ATDDVEDAAPETKEAVPESPRASGETAIHEPEPEAEQAVEDTA. Ser308 bears the Phosphoserine mark. Positions 322–332 are enriched in acidic residues; that stretch reads PEAEQAVEDTA. A Phosphothreonine modification is found at Thr331.

Belongs to the archaeal/bacterial/fungal opsin family.

It is found in the membrane. Probably cooperates with other heat shock proteins in the translocation of polypeptides through membranes. It may counteract the altering effect of heat shock on the plasma membrane. In Saccharomyces cerevisiae (strain ATCC 204508 / S288c) (Baker's yeast), this protein is 30 kDa heat shock protein (HSP30).